The sequence spans 241 residues: Large ribosomal subunit protein uL1 (241 aa).

The protein belongs to the universal ribosomal protein uL1 family. In terms of assembly, part of the 50S ribosomal subunit.

Its function is as follows. Binds directly to 23S rRNA. The L1 stalk is quite mobile in the ribosome, and is involved in E site tRNA release. In terms of biological role, protein L1 is also a translational repressor protein, it controls the translation of the L11 operon by binding to its mRNA. In Streptomyces avermitilis (strain ATCC 31267 / DSM 46492 / JCM 5070 / NBRC 14893 / NCIMB 12804 / NRRL 8165 / MA-4680), this protein is Large ribosomal subunit protein uL1.